The sequence spans 249 residues: Transcriptional activator protein EsaR (249 aa).

The 66-residue stretch at 174-239 folds into the HTH luxR-type domain; the sequence is QSADKTIFSS…QAIRLGVELD (66 aa). A DNA-binding region (H-T-H motif) is located at residues 198–217; the sequence is YAEIAAITGISVSTVKFHIK.

The protein belongs to the autoinducer-regulated transcriptional regulatory protein family.

In terms of biological role, functions as a potential OhlL-responsive transcriptional regulator. The sequence is that of Transcriptional activator protein EsaR (esaR) from Pantoea stewartii subsp. stewartii (Erwinia stewartii).